The chain runs to 563 residues: Inositol-3-phosphate synthase 1-B (563 aa).

It belongs to the myo-inositol 1-phosphate synthase family. NAD(+) is required as a cofactor.

Its subcellular location is the cytoplasm. It catalyses the reaction D-glucose 6-phosphate = 1D-myo-inositol 3-phosphate. It participates in polyol metabolism; myo-inositol biosynthesis; myo-inositol from D-glucose 6-phosphate: step 1/2. Functionally, key enzyme in myo-inositol biosynthesis pathway that catalyzes the conversion of glucose 6-phosphate to 1-myo-inositol 1-phosphate in a NAD-dependent manner. Rate-limiting enzyme in the synthesis of all inositol-containing compounds. The chain is Inositol-3-phosphate synthase 1-B (isyna1-b) from Xenopus laevis (African clawed frog).